The primary structure comprises 579 residues: DELLA protein RGA2 (579 aa).

Residues 1–31 (MKRDLHQFQGPPDTRFPNHGTANTGSSSKDK) are disordered. A DELLA motif motif is present at residues 45 to 49 (DELLA). Low complexity-rich tracts occupy residues 149-162 (SSSSSNQAGDNSQS) and 174-183 (SLVTGTTVTT). Residues 149–183 (SSSSSNQAGDNSQSTKRLKSCSSPDSLVTGTTVTT) form a disordered region. The region spanning 205 to 574 (VDSQENGVRL…RPLITTSAWK (370 aa)) is the GRAS domain. The leucine repeat I (LRI) stretch occupies residues 212–266 (VRLVHALMACAEAIQNNDLSIAEALVKQIGFLAVSQAGAMRKVATYFAEALARRI). The interval 285 to 350 (QMHFYETCPY…GGPPVFRLTG (66 aa)) is VHIID. A VHIID motif is present at residues 316-320 (VHVID). A leucine repeat II (LRII) region spans residues 364–396 (EVGCKLAQLAEAIHVEFEYRGFVANSLADLDAS). The PFYRE stretch occupies residues 408-495 (VAVNSVFELH…EVYLGKQICN (88 aa)). The LXXLL motif signature appears at 416 to 420 (LHKLL). The tract at residues 498–574 (ACEGPDRVER…RPLITTSAWK (77 aa)) is SAW.

It belongs to the GRAS family. DELLA subfamily. Phosphorylated. In terms of processing, ubiquitinated. Upon GA application it is ubiquitinated, leading to its subsequent degradation.

It localises to the nucleus. Its function is as follows. Probable transcriptional regulator that acts as a repressor of the gibberellin (GA) signaling pathway. Probably acts by participating in large multiprotein complexes that represses transcription of GA-inducible genes. Upon GA application, it is degraded by the proteasome, allowing the GA signaling pathway. This chain is DELLA protein RGA2 (RGA2), found in Brassica campestris (Field mustard).